A 154-amino-acid chain; its full sequence is Large ribosomal subunit protein uL13 (154 aa).

The protein belongs to the universal ribosomal protein uL13 family. In terms of assembly, part of the 50S ribosomal subunit.

Functionally, this protein is one of the early assembly proteins of the 50S ribosomal subunit, although it is not seen to bind rRNA by itself. It is important during the early stages of 50S assembly. The sequence is that of Large ribosomal subunit protein uL13 from Borrelia garinii subsp. bavariensis (strain ATCC BAA-2496 / DSM 23469 / PBi) (Borreliella bavariensis).